A 482-amino-acid chain; its full sequence is Capsule synthesis positive regulator AcpB (482 aa).

2 PRD domains span residues Pro165–Ile270 and Glu283–Asn395.

This sequence belongs to the AtxA/AcpA family.

AcpB and AcpA regulate cap gene expression and capsule synthesis. The sequence is that of Capsule synthesis positive regulator AcpB (acpB) from Bacillus anthracis.